The primary structure comprises 92 residues: MPRSLKKGPFVDEHLLNKVDAQNEKGTKQVIKTWSRRSTILPDFIGHTFAVHDGRKHVPVFVDDAMVGHKLGEFAPTKTFKGHVKDDKKGRR.

This sequence belongs to the universal ribosomal protein uS19 family.

Its function is as follows. Protein S19 forms a complex with S13 that binds strongly to the 16S ribosomal RNA. The sequence is that of Small ribosomal subunit protein uS19 from Corynebacterium efficiens (strain DSM 44549 / YS-314 / AJ 12310 / JCM 11189 / NBRC 100395).